We begin with the raw amino-acid sequence, 158 residues long: uncharacterized protein (158 aa).

Helical transmembrane passes span 12–32, 39–59, 90–110, and 113–133; these read IITL…AVVV, LDIL…SLSV, LIYL…FNTI, and IIST…WLPL.

It localises to the cell membrane. This is an uncharacterized protein from Mycoplasma genitalium (strain ATCC 33530 / DSM 19775 / NCTC 10195 / G37) (Mycoplasmoides genitalium).